The sequence spans 171 residues: Adenine phosphoribosyltransferase (171 aa).

Belongs to the purine/pyrimidine phosphoribosyltransferase family. In terms of assembly, homodimer.

It is found in the cytoplasm. It catalyses the reaction AMP + diphosphate = 5-phospho-alpha-D-ribose 1-diphosphate + adenine. Its pathway is purine metabolism; AMP biosynthesis via salvage pathway; AMP from adenine: step 1/1. In terms of biological role, catalyzes a salvage reaction resulting in the formation of AMP, that is energically less costly than de novo synthesis. The sequence is that of Adenine phosphoribosyltransferase from Pelotomaculum thermopropionicum (strain DSM 13744 / JCM 10971 / SI).